The sequence spans 399 residues: 26S proteasome regulatory subunit 10B homolog A (399 aa).

Threonine 2 is subject to N-acetylthreonine. 180–187 (GPPGTGKT) lines the ATP pocket. Lysine 203 is covalently cross-linked (Glycyl lysine isopeptide (Lys-Gly) (interchain with G-Cter in ubiquitin)).

It belongs to the AAA ATPase family. Component of the 19S regulatory particle (RP/PA700) base subcomplex of the 26S proteasome. The 26S proteasome is composed of a core protease (CP), known as the 20S proteasome, capped at one or both ends by the 19S regulatory particle (RP/PA700). The RP/PA700 complex is composed of at least 17 different subunits in two subcomplexes, the base and the lid, which form the portions proximal and distal to the 20S proteolytic core, respectively.

Its subcellular location is the cytoplasm. It is found in the nucleus. The 26S proteasome is involved in the ATP-dependent degradation of ubiquitinated proteins. The regulatory (or ATPase) complex confers ATP dependency and substrate specificity to the 26S complex. The chain is 26S proteasome regulatory subunit 10B homolog A (RPT4A) from Arabidopsis thaliana (Mouse-ear cress).